Reading from the N-terminus, the 322-residue chain is Ribosomal RNA small subunit methyltransferase H (322 aa).

Residues 42–44 (GGH), Asp62, Phe86, Asp107, and Gln114 contribute to the S-adenosyl-L-methionine site.

This sequence belongs to the methyltransferase superfamily. RsmH family.

It is found in the cytoplasm. It catalyses the reaction cytidine(1402) in 16S rRNA + S-adenosyl-L-methionine = N(4)-methylcytidine(1402) in 16S rRNA + S-adenosyl-L-homocysteine + H(+). Functionally, specifically methylates the N4 position of cytidine in position 1402 (C1402) of 16S rRNA. This Janthinobacterium sp. (strain Marseille) (Minibacterium massiliensis) protein is Ribosomal RNA small subunit methyltransferase H.